The sequence spans 421 residues: MMEVLVLGSGVVGLTSAWYLAQAGHDVTVVDRQPRGAEETSFANAGQISYGYSSPWAAPGIPQKALKWMLEKHAPLKIQPSLDPALLSWMGKMLLNCQLSRYQVNKSRMLAIANYSRECLKALNQTYSLDYQGRQRGTLQVFRDEKQLTAIEKDMQLLAQSGVRFELLNVAQCLTHEPGLAPVQEKLVGGLWLPDDETGDYYLFCQQLTELAKQQGVRFHFDCHIQQLVCEGKKIIGVQTDLGLLKADAYVVALGSYSTSLLKPLGIEIPVYPVKGYSLTLPIIDEKFAPQSTVMDETYKVALTRFSDRIRVAGTAELAGFDPAIPEARKATIEMVARDLFPHGGDFAKGQFWTGFRPMTPDGTPIIGATPYTNLYTNTGHGTLGWTMACGSASILADVLTHGESPLSRLGLDLFRYPKAS.

Val-4–Trp-18 contributes to the FAD binding site.

This sequence belongs to the DadA oxidoreductase family. Requires FAD as cofactor.

The enzyme catalyses a D-alpha-amino acid + A + H2O = a 2-oxocarboxylate + AH2 + NH4(+). The protein operates within amino-acid degradation; D-alanine degradation; NH(3) and pyruvate from D-alanine: step 1/1. Its function is as follows. Oxidative deamination of D-amino acids. This chain is D-amino acid dehydrogenase, found in Vibrio cholerae serotype O1 (strain ATCC 39541 / Classical Ogawa 395 / O395).